Consider the following 32-residue polypeptide: Cytochrome b6-f complex subunit 7 (32 aa).

A helical membrane pass occupies residues 9-27 (AAVFWVLIPVGLAGGALLL).

It belongs to the PetM family. In terms of assembly, the 4 large subunits of the cytochrome b6-f complex are cytochrome b6, subunit IV (17 kDa polypeptide, PetD), cytochrome f and the Rieske protein, while the 4 small subunits are PetG, PetL, PetM and PetN. The complex functions as a dimer.

The protein localises to the cellular thylakoid membrane. In terms of biological role, component of the cytochrome b6-f complex, which mediates electron transfer between photosystem II (PSII) and photosystem I (PSI), cyclic electron flow around PSI, and state transitions. The protein is Cytochrome b6-f complex subunit 7 of Prochlorococcus marinus (strain MIT 9303).